Reading from the N-terminus, the 400-residue chain is Elongation factor Tu 1 (400 aa).

In terms of domain architecture, tr-type G spans 10–209 (KPHLNIGTIG…AVDSYIPLPQ (200 aa)). Positions 19 to 26 (GHIDHGKT) are G1. 19 to 26 (GHIDHGKT) provides a ligand contact to GTP. Threonine 26 is a binding site for Mg(2+). The tract at residues 60–64 (GITIN) is G2. Residues 81–84 (DCPG) are G3. GTP contacts are provided by residues 81–85 (DCPGH) and 136–139 (NKTD). Residues 136–139 (NKTD) are G4. A G5 region spans residues 174-176 (SAL).

It belongs to the TRAFAC class translation factor GTPase superfamily. Classic translation factor GTPase family. EF-Tu/EF-1A subfamily. As to quaternary structure, monomer.

It is found in the cytoplasm. The catalysed reaction is GTP + H2O = GDP + phosphate + H(+). Functionally, GTP hydrolase that promotes the GTP-dependent binding of aminoacyl-tRNA to the A-site of ribosomes during protein biosynthesis. This is Elongation factor Tu 1 from Syntrophomonas wolfei subsp. wolfei (strain DSM 2245B / Goettingen).